The sequence spans 123 residues: Defensin beta 118 (123 aa).

The first 19 residues, M1–P19, serve as a signal peptide directing secretion. Intrachain disulfides connect C27-C54, C34-C48, and C38-C55. 2 disordered regions span residues N59–G79 and M102–S123. Residues Q64 to S123 constitute a propeptide that is removed on maturation. A compositionally biased stretch (low complexity) spans P66–G79.

The protein belongs to the beta-defensin family. The three-dimensional structure formed by the three intramolecular disulfide bridges is indispensable for antimicrobial activity.

It is found in the secreted. In terms of biological role, host defense peptide that exhibits antimicrobial activity against both Gram-negative bacteria, such as E.coli and S.typhimurium, and Gram-positive bacteria, such as S.aureus and B.subtilis. Inhibits cell adhesion of E.coli on intestinal epithelial enterocytes. Causes rapid permeabilization of both the outer and inner membrane of E.coli, leading to morphological alterations on the bacterial surface. Binds to bacterial lipopolysaccharides (LPS) with high affinity, and may thereby be involved in immunoregulation through LPS neutralization. May contribute to epididymal innate immunity and protect the sperm against attack by microorganisms. This chain is Defensin beta 118 (DEFB118), found in Hylobates lar (Lar gibbon).